Reading from the N-terminus, the 147-residue chain is Transthyretin (147 aa).

The first 20 residues, 1–20 (MASLRLFLLCLAGLVFVSEA), serve as a signal peptide directing secretion. Sulfocysteine is present on Cys30. An L-thyroxine-binding site is contributed by Lys35. The residue at position 62 (Glu62) is a 4-carboxyglutamate. Ser72 is subject to Phosphoserine. Glu74 provides a ligand contact to L-thyroxine. N-linked (GlcNAc...) asparagine glycosylation is present at Asn118. Ser137 is an L-thyroxine binding site.

It belongs to the transthyretin family. Homotetramer. Dimer of dimers. In the homotetramer, subunits assemble around a central channel that can accommodate two ligand molecules. Interacts with RBP4. Post-translationally, sulfonation of the reactive cysteine Cys-30 enhances the stability of the native conformation of TTR, avoiding misassembly of the protein leading to amyloid formation. Detected in plasma (at protein level). Detected in liver.

It is found in the secreted. Its function is as follows. Thyroid hormone-binding protein. Probably transports thyroxine from the bloodstream to the brain. The sequence is that of Transthyretin (Ttr) from Mus musculus (Mouse).